The following is a 416-amino-acid chain: Homogentisate 1,2-dioxygenase (416 aa).

Residue histidine 275 is the Proton acceptor of the active site. 2 residues coordinate Fe cation: histidine 318 and glutamate 324. Positions 333 and 354 each coordinate homogentisate. Residue histidine 354 coordinates Fe cation.

It belongs to the homogentisate dioxygenase family. Hexamer; dimer of trimers. Fe cation serves as cofactor.

It carries out the reaction homogentisate + O2 = 4-maleylacetoacetate + H(+). The protein operates within amino-acid degradation; L-phenylalanine degradation; acetoacetate and fumarate from L-phenylalanine: step 4/6. Involved in the catabolism of homogentisate (2,5-dihydroxyphenylacetate or 2,5-OH-PhAc), a central intermediate in the degradation of phenylalanine and tyrosine. Catalyzes the oxidative ring cleavage of the aromatic ring of homogentisate to yield maleylacetoacetate. In Legionella pneumophila (strain Corby), this protein is Homogentisate 1,2-dioxygenase.